An 86-amino-acid chain; its full sequence is High affinity immunoglobulin epsilon receptor subunit gamma (86 aa).

A signal peptide spans 1-18 (MISAVILFLLLLVEQAAA). The Extracellular segment spans residues 19–23 (LGEPQ). A helical transmembrane segment spans residues 24 to 44 (LCYILDAVLFLYGIVLTLLYC). At 45 to 86 (RLKIQVRKAAIASREKADAVYTGLNTRSQETYETLKHEKPPQ) the chain is on the cytoplasmic side. One can recognise an ITAM domain in the interval 54-82 (AIASREKADAVYTGLNTRSQETYETLKHE). A phosphotyrosine mark is found at Y65 and Y76. Phosphothreonine is present on T78.

The protein belongs to the CD3Z/FCER1G family. IgE Fc receptor is a tetramer of an alpha chain, a beta chain, and two disulfide linked gamma chains. Associates with FCGR1A; forms a functional signaling complex. The signaling subunit of immunoglobulin gamma (IgG) Fc receptor complex. As a homodimer or a heterodimer of CD247 and FCER1G, associates with the ligand binding subunit FCGR3A to form a functional receptor complex. Associates with CLEC6A. Interacts with CLEC4E. Interacts (via ITAM domain) with SYK (via SH2 domains); activates SYK, enabling integrin-mediated activation of neutrophils and macrophages. Interacts with CSF2RB and recruits SYK in response to IL3 stimulation; this interaction is direct. Interacts with CD300LH; the interaction may be indirect. Interacts with CD300LD. Interacts with TARM1. Expressed in mast cells (at protein level). Expressed in basophils (at protein level).

The protein resides in the cell membrane. Its function is as follows. Adapter protein containing an immunoreceptor tyrosine-based activation motif (ITAM) that transduces activation signals from various immunoreceptors. As a component of the high-affinity immunoglobulin E (IgE) receptor, mediates allergic inflammatory signaling in mast cells. As a constitutive component of interleukin-3 receptor complex, selectively mediates interleukin 4/IL4 production by basophils, priming T-cells toward effector T-helper 2 subset. Associates with pattern recognition receptors CLEC4D and CLEC4E to form a functional signaling complex in myeloid cells. Binding of mycobacterial trehalose 6,6'-dimycolate (TDM) to this receptor complex leads to phosphorylation of ITAM, triggering activation of SYK, CARD9 and NF-kappa-B, consequently driving maturation of antigen-presenting cells and shaping antigen-specific priming of T-cells toward effector T-helper 1 and T-helper 17 cell subtypes. May function cooperatively with other activating receptors. Functionally linked to integrin beta-2/ITGB2-mediated neutrophil activation. Also involved in integrin alpha-2/ITGA2-mediated platelet activation. The sequence is that of High affinity immunoglobulin epsilon receptor subunit gamma from Mus musculus (Mouse).